A 161-amino-acid polypeptide reads, in one-letter code: Probable K(+)/H(+) antiporter subunit E (161 aa).

The next 2 membrane-spanning stretches (helical) occupy residues 4–21 (WFPY…WLLL) and 28–50 (GSIV…LQPA).

Belongs to the CPA3 antiporters (TC 2.A.63) subunit E family. May form a hetero-oligomeric complex that consists of six subunits: PhaAB, PhaC, PhaD, PhaE, PhaF and PhaG.

The protein localises to the cell membrane. In terms of biological role, part of a K(+) efflux system which is required for the adaptation of R.meliloti to alkaline pH as well as for the infection process during symbiotic nodule development. The sequence is that of Probable K(+)/H(+) antiporter subunit E (phaE) from Rhizobium meliloti (strain 1021) (Ensifer meliloti).